A 112-amino-acid chain; its full sequence is Protein lin-52 homolog (112 aa).

It belongs to the lin-52 family. Component of the DREAM complex.

This Tetraodon nigroviridis (Spotted green pufferfish) protein is Protein lin-52 homolog (lin52).